Reading from the N-terminus, the 235-residue chain is Phosphoribosylaminoimidazole-succinocarboxamide synthase (235 aa).

Belongs to the SAICAR synthetase family.

It catalyses the reaction 5-amino-1-(5-phospho-D-ribosyl)imidazole-4-carboxylate + L-aspartate + ATP = (2S)-2-[5-amino-1-(5-phospho-beta-D-ribosyl)imidazole-4-carboxamido]succinate + ADP + phosphate + 2 H(+). It participates in purine metabolism; IMP biosynthesis via de novo pathway; 5-amino-1-(5-phospho-D-ribosyl)imidazole-4-carboxamide from 5-amino-1-(5-phospho-D-ribosyl)imidazole-4-carboxylate: step 1/2. In Clostridium perfringens (strain 13 / Type A), this protein is Phosphoribosylaminoimidazole-succinocarboxamide synthase.